Reading from the N-terminus, the 412-residue chain is Elongation factor 1-gamma 2 (412 aa).

Ser-2 is subject to N-acetylserine. In terms of domain architecture, GST N-terminal spans 2–77 (SQGTLYINRS…YLANQVADEK (76 aa)). A GST C-terminal domain is found at 86-217 (DVIEKSQILR…AEKALTYTPP (132 aa)). The tract at residues 216 to 253 (PPKKQKAEKPKAEKSKAEKKKDEAKPADDAAPAKKPKH) is disordered. Positions 220 to 247 (QKAEKPKAEKSKAEKKKDEAKPADDAAP) are enriched in basic and acidic residues. The 162-residue stretch at 251-412 (PKHPLEALGK…KEIVDGKVLK (162 aa)) folds into the EF-1-gamma C-terminal domain.

In terms of assembly, the eukaryotic elongation factor 1 complex (eEF1) is probably a heterohexamer. Two trimeric complexes, each composed of eEF1A (TEF1 or TEF2), eEF1Balpha (EFB1) and eEF1Bgamma (CAM1 or TEF4), are probably dimerized via the eF1Bgamma subunits. The eEF1B subcomplex with the GEF activity is formed of eEF1Balpha and eEF1Bgamma. TEF4 interacts with EFB1.

It is found in the cytoplasm. It functions in the pathway protein biosynthesis; polypeptide chain elongation. Its function is as follows. Subunit of the eukaryotic elongation factor 1 complex (eEF1). Probably plays a role in anchoring the complex to other cellular components. The polypeptide is Elongation factor 1-gamma 2 (TEF4) (Saccharomyces cerevisiae (strain ATCC 204508 / S288c) (Baker's yeast)).